The chain runs to 664 residues: Putative carboxypeptidase suro-1 (664 aa).

An N-terminal signal peptide occupies residues 1 to 23 (MRYLCKSILLAVHTILLVGSVCC). Positions 24 to 110 (STDVHNTDDK…MSVPDVEKLI (87 aa)) are cleaved as a propeptide — activation peptide. The region spanning 160-473 (DYASYADMVK…EGFREVVDAV (314 aa)) is the Peptidase M14 domain. Residues His219 and Glu222 each coordinate Zn(2+). Substrate contacts are provided by residues 219 to 222 (HARE), Arg281, and 306 to 307 (NR). His361 serves as a coordination point for Zn(2+). Substrate is bound at residue 362-363 (SY). Glu437 (proton donor/acceptor) is an active-site residue. A compositionally biased stretch (low complexity) spans 512–543 (ASQAAGSTTRSTTTLKTSTTSVSTTSEATSPS). Positions 512–590 (ASQAAGSTTR…TTTTEEEDVT (79 aa)) are disordered. A compositionally biased stretch (pro residues) spans 564–573 (PTPPMAPPIM). Residues 574-583 (SPSTEFSTTT) are compositionally biased toward low complexity. The region spanning 621 to 657 (CRDMRYSCGFWLKNNKQVCEEQQSFMRAQCAYTCKFC) is the ShKT domain. 3 cysteine pairs are disulfide-bonded: Cys621/Cys657, Cys628/Cys650, and Cys639/Cys654.

It belongs to the peptidase M14 family. Zn(2+) serves as cofactor. In terms of tissue distribution, localizes in stripes along the cuticle.

The protein localises to the cytoplasmic vesicle. Its subcellular location is the secreted. Its function is as follows. May play a role in processing or organization of cuticle collagen proteins, including rol-6 and col-19. This is Putative carboxypeptidase suro-1 from Caenorhabditis elegans.